A 142-amino-acid polypeptide reads, in one-letter code: MAKKIEGYIKLQVPAGAANPSPPIGPALGQRGLNIMEFCKAFNAATQKMEQGMPIPVVITAFSDRSFTFAMKTPPASYFLKKAAKVTSGSKTPGRASAGTVTVAQCREIAEAKMADLNANDLDQATKIIAGSARSMGLQVVE.

It belongs to the universal ribosomal protein uL11 family. Part of the ribosomal stalk of the 50S ribosomal subunit. Interacts with L10 and the large rRNA to form the base of the stalk. L10 forms an elongated spine to which L12 dimers bind in a sequential fashion forming a multimeric L10(L12)X complex. In terms of processing, one or more lysine residues are methylated.

In terms of biological role, forms part of the ribosomal stalk which helps the ribosome interact with GTP-bound translation factors. The polypeptide is Large ribosomal subunit protein uL11 (Parvibaculum lavamentivorans (strain DS-1 / DSM 13023 / NCIMB 13966)).